The chain runs to 183 residues: Small ribosomal subunit protein uS4 (183 aa).

Positions 106–168 (RRLETLVYKK…ETSPFTDENH (63 aa)) constitute an S4 RNA-binding domain. The tract at residues 158–183 (NETSPFTDENHPLRMEMSGTKEEENE) is disordered. Positions 165 to 183 (DENHPLRMEMSGTKEEENE) are enriched in basic and acidic residues.

The protein belongs to the universal ribosomal protein uS4 family. Part of the 30S ribosomal subunit. Contacts protein S5. The interaction surface between S4 and S5 is involved in control of translational fidelity.

Its function is as follows. One of the primary rRNA binding proteins, it binds directly to 16S rRNA where it nucleates assembly of the body of the 30S subunit. In terms of biological role, with S5 and S12 plays an important role in translational accuracy. In Picrophilus torridus (strain ATCC 700027 / DSM 9790 / JCM 10055 / NBRC 100828 / KAW 2/3), this protein is Small ribosomal subunit protein uS4.